The following is a 290-amino-acid chain: Ribosomal protein L11 methyltransferase (290 aa).

Thr-135, Gly-158, Asp-180, and Asn-227 together coordinate S-adenosyl-L-methionine.

It belongs to the methyltransferase superfamily. PrmA family.

Its subcellular location is the cytoplasm. The catalysed reaction is L-lysyl-[protein] + 3 S-adenosyl-L-methionine = N(6),N(6),N(6)-trimethyl-L-lysyl-[protein] + 3 S-adenosyl-L-homocysteine + 3 H(+). Functionally, methylates ribosomal protein L11. The protein is Ribosomal protein L11 methyltransferase of Chelativorans sp. (strain BNC1).